The primary structure comprises 122 residues: MANFFVRLWESVFEPGTSPQLIIATHVSFVALLLTLIWLIYATNGNIHFYALFCISLLLWITVIWFINELSHVKLKDNDELDKDANKKDDSAIKEDSEDKQESGKSTSTARRTQAQSRSRKA.

At 1–20 the chain is on the cytoplasmic side; that stretch reads MANFFVRLWESVFEPGTSPQ. A helical membrane pass occupies residues 21-41; sequence LIIATHVSFVALLLTLIWLIY. The Lumenal segment spans residues 42–46; it reads ATNGN. A helical transmembrane segment spans residues 47–67; the sequence is IHFYALFCISLLLWITVIWFI. The Cytoplasmic portion of the chain corresponds to 68–122; it reads NELSHVKLKDNDELDKDANKKDDSAIKEDSEDKQESGKSTSTARRTQAQSRSRKA. The segment covering 82 to 103 has biased composition (basic and acidic residues); sequence DKDANKKDDSAIKEDSEDKQES. A disordered region spans residues 82–122; the sequence is DKDANKKDDSAIKEDSEDKQESGKSTSTARRTQAQSRSRKA. Polar residues predominate over residues 104–122; the sequence is GKSTSTARRTQAQSRSRKA.

This sequence belongs to the PKR1 family.

Its subcellular location is the endoplasmic reticulum membrane. Its function is as follows. Functions together with the other V-type ATPase assembly factors in the endoplasmic reticulum to efficiently assemble the V-type ATPase membrane sector V(0). The chain is V-type ATPase assembly factor PKR1 (PKR1) from Saccharomyces cerevisiae (strain ATCC 204508 / S288c) (Baker's yeast).